Consider the following 334-residue polypeptide: Homoserine O-acetyltransferase (334 aa).

The AB hydrolase-1 domain maps to 61-318; the sequence is LVLHALTGDS…GSIHGHDAFL (258 aa). Catalysis depends on Ser-148, which acts as the Nucleophile. Arg-205 serves as a coordination point for substrate. Active-site residues include Asp-285 and His-314. Asp-315 is a binding site for substrate.

It belongs to the AB hydrolase superfamily. MetX family. In terms of assembly, homodimer.

It localises to the cytoplasm. It carries out the reaction L-homoserine + acetyl-CoA = O-acetyl-L-homoserine + CoA. Its pathway is amino-acid biosynthesis; L-methionine biosynthesis via de novo pathway; O-acetyl-L-homoserine from L-homoserine: step 1/1. Functionally, transfers an acetyl group from acetyl-CoA to L-homoserine, forming acetyl-L-homoserine. The chain is Homoserine O-acetyltransferase from Deinococcus radiodurans (strain ATCC 13939 / DSM 20539 / JCM 16871 / CCUG 27074 / LMG 4051 / NBRC 15346 / NCIMB 9279 / VKM B-1422 / R1).